Reading from the N-terminus, the 1029-residue chain is Chitin synthase 3 (1029 aa).

The segment at 1–29 (MAYYSRPASAGAARAQDDQDPYPYYPDPD) is disordered. The N-linked (GlcNAc...) asparagine glycan is linked to Asn-37. Residues 46–71 (ASGAASSASHTSPFSDAHAASASPAS) are compositionally biased toward low complexity. Disordered stretches follow at residues 46-105 (ASGA…SRMP) and 168-209 (LAHR…AGTS). The span at 76 to 91 (SHQQVSAHAPQQQHMS) shows a compositional bias: polar residues. A compositionally biased stretch (basic and acidic residues) spans 191–202 (AHDEKYAYDRPD). N-linked (GlcNAc...) asparagine glycans are attached at residues Asn-401, Asn-514, Asn-527, and Asn-689. Transmembrane regions (helical) follow at residues 723–743 (FYSFVNMCFAWFGLANYYIFF), 760–780 (IGVFNVFMQYIYLGTVVSSFI), 796–816 (AAVVVFALLTVYMMVAAVLCL), 830–850 (AQMVVSLLATYGVYLISSLLA), 860–880 (FLQYLLLAPTYINILNIYAFC), 963–983 (VVLAWALSNGVLAAFILNGDA), and 998–1018 (VYMVLVLIFVAGMACIRFIGS).

Belongs to the chitin synthase family. Class I subfamily.

It is found in the cell membrane. It localises to the cytoplasmic vesicle membrane. The enzyme catalyses [(1-&gt;4)-N-acetyl-beta-D-glucosaminyl](n) + UDP-N-acetyl-alpha-D-glucosamine = [(1-&gt;4)-N-acetyl-beta-D-glucosaminyl](n+1) + UDP + H(+). Polymerizes chitin, a structural polymer of the cell wall and septum, by transferring the sugar moiety of UDP-GlcNAc to the non-reducing end of the growing chitin polymer. In Mycosarcoma maydis (Corn smut fungus), this protein is Chitin synthase 3.